Here is a 316-residue protein sequence, read N- to C-terminus: MSVFTPLERSTLEAFLAPYDLGRLRDFRGIAEGSENSNFFVSLEHGEFVLTLVERGPVQDLPFFIELLDVLHEDGLPVPYALRTRDGEALRRLEGKPALLQPRLAGRHERQPNAHHCQEVGDLLGHLHAATRGRILERPSDRGLPWMLEQGANLAPRLPEQARALLAPALAEIAALDAERPALPRANLHADLFRDNVLFDGPHLAGLIDFYNACSGWMLYDLAITLNDWCSNTDGSLDPARARALLAAYANRRPFTALEAEHWPSMLRVACVRFWLSRLIAAEAFAGQDVLIHDPAEFEIRLAQRQNVEIHLPFAL.

It belongs to the pseudomonas-type ThrB family.

It carries out the reaction L-homoserine + ATP = O-phospho-L-homoserine + ADP + H(+). It participates in amino-acid biosynthesis; L-threonine biosynthesis; L-threonine from L-aspartate: step 4/5. The chain is Homoserine kinase (thrB) from Pseudomonas aeruginosa (strain ATCC 15692 / DSM 22644 / CIP 104116 / JCM 14847 / LMG 12228 / 1C / PRS 101 / PAO1).